Here is a 514-residue protein sequence, read N- to C-terminus: Peptide chain release factor 3 (514 aa).

The region spanning 8–268 (KKRRTFAIIS…TFLKFAPEPH (261 aa)) is the tr-type G domain. GTP is bound by residues 17 to 24 (SHPDAGKT), 85 to 89 (DTPGH), and 139 to 142 (NKLD).

It belongs to the TRAFAC class translation factor GTPase superfamily. Classic translation factor GTPase family. PrfC subfamily.

It localises to the cytoplasm. In terms of biological role, increases the formation of ribosomal termination complexes and stimulates activities of RF-1 and RF-2. It binds guanine nucleotides and has strong preference for UGA stop codons. It may interact directly with the ribosome. The stimulation of RF-1 and RF-2 is significantly reduced by GTP and GDP, but not by GMP. The polypeptide is Peptide chain release factor 3 (Streptococcus sanguinis (strain SK36)).